We begin with the raw amino-acid sequence, 167 residues long: Peptidoglycan-binding-like protein (167 aa).

An N-terminal signal peptide occupies residues 1-24; sequence MRSPKVKFLTIFTLSILITKMSFA.

The protein belongs to the IagB/IpgF/P19 family.

The protein localises to the periplasm. In Escherichia coli O157:H7, this protein is Peptidoglycan-binding-like protein (pbl).